We begin with the raw amino-acid sequence, 176 residues long: Disulfide bond formation protein B (176 aa).

Topologically, residues 1–14 (MLRFLNQCSQGRGA) are cytoplasmic. A helical membrane pass occupies residues 15 to 31 (WLLMAFTALALELTALW). Residues 32–49 (FQHVMLLKPCVLCIYERC) lie on the Periplasmic side of the membrane. C41 and C44 are joined by a disulfide. The helical transmembrane segment at 50-65 (ALFGVLGAALIGAIAP) threads the bilayer. Residues 66 to 71 (KTPLRY) are Cytoplasmic-facing. A helical transmembrane segment spans residues 72 to 89 (VAMVIWLYSAFRGVQLTY). Topologically, residues 90–144 (EHTMLQLYPSPFATCDFMARFPEWLPLDKWVPQVFVASGDCAERQWEFLGLEMPQ) are periplasmic. A disulfide bond links C104 and C130. A helical transmembrane segment spans residues 145–163 (WLLGIFIAYLIVAVLVVIS). Topologically, residues 164 to 176 (QPFKAKKRDLFGR) are cytoplasmic.

This sequence belongs to the DsbB family.

The protein resides in the cell inner membrane. Its function is as follows. Required for disulfide bond formation in some periplasmic proteins. Acts by oxidizing the DsbA protein. This is Disulfide bond formation protein B from Escherichia coli O1:K1 / APEC.